Here is a 200-residue protein sequence, read N- to C-terminus: Fibrillarin-like rRNA/tRNA 2'-O-methyltransferase (200 aa).

Residues 62–63 (TT), 78–79 (EF), 103–104 (DA), and 123–126 (DVAQ) each bind S-adenosyl-L-methionine.

The protein belongs to the methyltransferase superfamily. Fibrillarin family. Interacts with nop5. Component of box C/D small ribonucleoprotein (sRNP) particles that contain rpl7ae, FlpA and nop5, plus a guide RNA.

In terms of biological role, involved in pre-rRNA and tRNA processing. Utilizes the methyl donor S-adenosyl-L-methionine to catalyze the site-specific 2'-hydroxyl methylation of ribose moieties in rRNA and tRNA. Site specificity is provided by a guide RNA that base pairs with the substrate. Methylation occurs at a characteristic distance from the sequence involved in base pairing with the guide RNA. In Methanoculleus marisnigri (strain ATCC 35101 / DSM 1498 / JR1), this protein is Fibrillarin-like rRNA/tRNA 2'-O-methyltransferase.